The following is a 772-amino-acid chain: UDP-N-acetylmuramoyl-L-alanyl-D-glutamate--2,6-diaminopimelate ligase MurE homolog, chloroplastic (772 aa).

Residues 1 to 40 (MAFTFLSPHPVFLSLTGTTSSFSYKPVLLPFSRNSRTLTV) constitute a chloroplast transit peptide. Disordered stretches follow at residues 42–87 (AGPA…KLEE) and 141–168 (LLKP…DVTD). Acidic residues-rich tracts occupy residues 54 to 63 (ADDDPPEAPE) and 158 to 168 (EGNEEEGDVTD). S194 bears the Phosphoserine mark.

It belongs to the MurCDEF family. MurE subfamily. Component of the plastid-encoded plastid RNA polymerase (PEP) complex. As to expression, expressed in leaves and flowers.

Its subcellular location is the plastid. It is found in the chloroplast. Functionally, involved in chloroplast biogenesis. Required for thylakoid membrane development. Seems to be required for plastid-encoded plastid RNA polymerase (PEP)-dependent gene expression. In Arabidopsis thaliana (Mouse-ear cress), this protein is UDP-N-acetylmuramoyl-L-alanyl-D-glutamate--2,6-diaminopimelate ligase MurE homolog, chloroplastic.